Reading from the N-terminus, the 173-residue chain is NAD(P)H-quinone oxidoreductase subunit J (173 aa).

It belongs to the complex I 30 kDa subunit family. As to quaternary structure, NDH-1 can be composed of about 15 different subunits; different subcomplexes with different compositions have been identified which probably have different functions.

The protein localises to the cellular thylakoid membrane. It catalyses the reaction a plastoquinone + NADH + (n+1) H(+)(in) = a plastoquinol + NAD(+) + n H(+)(out). The enzyme catalyses a plastoquinone + NADPH + (n+1) H(+)(in) = a plastoquinol + NADP(+) + n H(+)(out). NDH-1 shuttles electrons from an unknown electron donor, via FMN and iron-sulfur (Fe-S) centers, to quinones in the respiratory and/or the photosynthetic chain. The immediate electron acceptor for the enzyme in this species is believed to be plastoquinone. Couples the redox reaction to proton translocation, and thus conserves the redox energy in a proton gradient. Cyanobacterial NDH-1 also plays a role in inorganic carbon-concentration. The chain is NAD(P)H-quinone oxidoreductase subunit J from Prochlorococcus marinus (strain NATL1A).